A 614-amino-acid polypeptide reads, in one-letter code: MDKRTDYAGNITSKYEGQEVTLYGWVQRVRNLGNLVFIDLRDREGIVQVVVNKDSGEKLMEIADSLNNEDVIEVKGKVVKRSSVNPEMKTGEVEVDATEIDVLNKSKVPPFEIKDDINAAEQTRLKYRYLDLRRPTLQRAIILRSKILKAVHEYFDEQGFIDIETPILGKSSPEGARDYLVPSRIYPGSFYALPQSPQLFKQLLMGAGFDKYYQLARCFRDEDLRGDRQPEFTQIDMETSFLDEQGVQDYTEGLLKKIMKDVMNIDLKTPIKRITWDEAMNKYGSDKPDTRYEMYLHDLSPIFKDSDFKVFSGAIADGGVVKGIAVKNGAKEYSRKKIEEKQDYIKRYNAKGLAWVKYEDGEFSGPIARFLTDENKEALKKEFDLEGGELIVIVADKWKVVTDSLDHLRREFAHETGIIPEGVFDFVWVVDWPLFEYDEGLGRWIAAHHPFTMPDDEGIKLLDTDPHKAHARSYDIVMNGDEMGGGSIRIHKRSIQEKMFKALGFTKKRAYEQFGYLMDALDMGFPPHAGLAIGLDRLAMMLAGKDNIRDVTAFPKNASASEPMMHAPAPVADQQLADIGIEVEKQYEDSVKETEQRLEKEAQEDADKNSTWDE.

Position 174 (glutamate 174) interacts with L-aspartate. The tract at residues 198–201 is aspartate; the sequence is QLFK. Arginine 220 lines the L-aspartate pocket. Residues 220 to 222 and glutamine 229 each bind ATP; that span reads RDE. Histidine 448 contributes to the L-aspartate binding site. An ATP-binding site is contributed by glutamate 482. Arginine 489 contacts L-aspartate. ATP is bound at residue 534–537; sequence GLDR. Positions 587 to 614 are disordered; the sequence is YEDSVKETEQRLEKEAQEDADKNSTWDE.

Belongs to the class-II aminoacyl-tRNA synthetase family. Type 1 subfamily. As to quaternary structure, homodimer.

It is found in the cytoplasm. It catalyses the reaction tRNA(Asp) + L-aspartate + ATP = L-aspartyl-tRNA(Asp) + AMP + diphosphate. Functionally, catalyzes the attachment of L-aspartate to tRNA(Asp) in a two-step reaction: L-aspartate is first activated by ATP to form Asp-AMP and then transferred to the acceptor end of tRNA(Asp). This Lactobacillus johnsonii (strain CNCM I-12250 / La1 / NCC 533) protein is Aspartate--tRNA ligase.